A 360-amino-acid chain; its full sequence is 3-dehydroquinate synthase (360 aa).

Residues 69–74 (DGEKYK), 103–107 (GVVGD), 127–128 (TT), Lys-140, Lys-149, and 167–170 (TLDT) contribute to the NAD(+) site. Residues Glu-182, His-246, and His-263 each coordinate Zn(2+).

This sequence belongs to the sugar phosphate cyclases superfamily. Dehydroquinate synthase family. Requires Co(2+) as cofactor. The cofactor is Zn(2+). NAD(+) serves as cofactor.

The protein resides in the cytoplasm. The catalysed reaction is 7-phospho-2-dehydro-3-deoxy-D-arabino-heptonate = 3-dehydroquinate + phosphate. It participates in metabolic intermediate biosynthesis; chorismate biosynthesis; chorismate from D-erythrose 4-phosphate and phosphoenolpyruvate: step 2/7. Catalyzes the conversion of 3-deoxy-D-arabino-heptulosonate 7-phosphate (DAHP) to dehydroquinate (DHQ). The sequence is that of 3-dehydroquinate synthase from Vesicomyosocius okutanii subsp. Calyptogena okutanii (strain HA).